A 130-amino-acid polypeptide reads, in one-letter code: MTKEFNYGTGRRKTATARTRLYPGTGVIEINGRPYEEFFPRKTLQMIIRQPLVLTKMLEKFDVKVNVAGGGISGQAEAVRHGISRALLELDAELRPVLKRAGFLTRDARKKERKKYGLRAARARYQYSKR.

It belongs to the universal ribosomal protein uS9 family.

In Nitratidesulfovibrio vulgaris (strain ATCC 29579 / DSM 644 / CCUG 34227 / NCIMB 8303 / VKM B-1760 / Hildenborough) (Desulfovibrio vulgaris), this protein is Small ribosomal subunit protein uS9.